The following is a 343-amino-acid chain: Small ribosomal subunit biogenesis GTPase RsgA (343 aa).

The region spanning 116 to 275 (RGQLKPVAAN…LIDSPGIREF (160 aa)) is the CP-type G domain. GTP-binding positions include 163 to 166 (NKAD) and 217 to 225 (GQSGVGKSS). Cysteine 299, cysteine 304, histidine 306, and cysteine 312 together coordinate Zn(2+).

This sequence belongs to the TRAFAC class YlqF/YawG GTPase family. RsgA subfamily. Monomer. Associates with 30S ribosomal subunit, binds 16S rRNA. The cofactor is Zn(2+).

The protein localises to the cytoplasm. One of several proteins that assist in the late maturation steps of the functional core of the 30S ribosomal subunit. Helps release RbfA from mature subunits. May play a role in the assembly of ribosomal proteins into the subunit. Circularly permuted GTPase that catalyzes slow GTP hydrolysis, GTPase activity is stimulated by the 30S ribosomal subunit. This chain is Small ribosomal subunit biogenesis GTPase RsgA, found in Pseudomonas savastanoi pv. phaseolicola (strain 1448A / Race 6) (Pseudomonas syringae pv. phaseolicola (strain 1448A / Race 6)).